A 1009-amino-acid polypeptide reads, in one-letter code: Membrane alanyl aminopeptidase (1009 aa).

The N-terminal stretch at 1-15 (MAAIKLLVLSLACAC) is a signal peptide. Residues 16–52 (VIAHSPIPPASRTIFLDERLEGGAFENIDAFENIELS) constitute a propeptide, activation peptide. 338–342 (GAMEN) contacts substrate. His374 contributes to the Zn(2+) binding site. Glu375 serves as the catalytic Proton acceptor. Residues His378 and Glu397 each coordinate Zn(2+). Asn906 is a glycosylation site (N-linked (GlcNAc...) asparagine). Residues 955–980 (PSTSTTSTTAAPTTVTQPTITEPSTP) form a disordered region. Asp987 is lipidated: GPI-anchor amidated aspartate. Residues 988 to 1009 (SAMTSFASLFIISLGAILHLIL) constitute a propeptide, removed in mature form.

This sequence belongs to the peptidase M1 family. The cofactor is Zn(2+).

Its subcellular location is the cell membrane. In terms of biological role, binds to the B.thuringiensis toxin, CryIA(C). The polypeptide is Membrane alanyl aminopeptidase (Heliothis virescens (Tobacco budworm moth)).